A 134-amino-acid chain; its full sequence is MAGENTSRRTGSARLDEVIPEFELVSTDVKILAEKYLQDERIYRIWFEYLIPDEIDLIFPTTDGKLNYLSFTKRLASAIRYGRIKTAVSNNSSSNSYGSTEHVCDHGTSLCGRSERFASVINRFLDLHQILKDC.

The protein belongs to the herpesviridae TRM2 protein family. As to quaternary structure, associates with TRM1 and TRM3 to form the tripartite terminase complex.

It is found in the host nucleus. Component of the molecular motor that translocates viral genomic DNA in empty capsid during DNA packaging. Forms a tripartite terminase complex together with TRM1 and TRM3 in the host cytoplasm. Once the complex reaches the host nucleus, it interacts with the capsid portal vertex. This portal forms a ring in which genomic DNA is translocated into the capsid. In Gallus gallus (Chicken), this protein is Tripartite terminase subunit 2.